The sequence spans 339 residues: 1-aminocyclopropane-1-carboxylate deaminase (339 aa).

K52 is subject to N6-(pyridoxal phosphate)lysine. The Nucleophile role is filled by S79.

It belongs to the ACC deaminase/D-cysteine desulfhydrase family. Homotrimer. Requires pyridoxal 5'-phosphate as cofactor.

It carries out the reaction 1-aminocyclopropane-1-carboxylate + H2O = 2-oxobutanoate + NH4(+). In terms of biological role, catalyzes a cyclopropane ring-opening reaction, the irreversible conversion of 1-aminocyclopropane-1-carboxylate (ACC) to ammonia and alpha-ketobutyrate. Allows growth on ACC as a nitrogen source. The protein is 1-aminocyclopropane-1-carboxylate deaminase of Bradyrhizobium sp. (strain BTAi1 / ATCC BAA-1182).